A 454-amino-acid chain; its full sequence is MLKQILSEMYIDPDLLAELSEEQKQILFFKMREEQIRRWKEREAAMERKESLPVKPRPKKENGKSVHWKLGADKEVWVWVMGEHHLDKPYDVLCNEIIAERARLKAEQEAEEPRKTHSEEFTNSLKTKSQYHDLQAPDNQQTKDIWKKVAEKEELEQGSRPAPTLEEEKIRSLSSSSRNIQQMLADSINRMKAYAFHQKKESMKKKQDEEINQIEEERTKQICKSWKEDSEWQASLRKSKAADEKRRSLAKQAREDYKRLSLGAQKGRGGERLQSPLRVPQKPERPPLPPKPQFLNSGAYPQKPLRNQGVVRTLSSSAQEDIIRWFKEEQLPLRAGYQKTSDTIAPWFHGILTLKKANELLLSTGMPGSFLIRVSERIKGYALSYLSEDGCKHFLIDASADAYSFLGVDQLQHATLADLVEYHKEEPITSLGKELLLYPCGQQDQLPDYLELFE.

Disordered stretches follow at residues 45 to 65 (AMERKESLPVKPRPKKENGKS), 107 to 131 (EQEAEEPRKTHSEEFTNSLKTKSQY), 152 to 177 (KEELEQGSRPAPTLEEEKIRSLSSSS), and 237 to 302 (RKSK…AYPQ). Positions 107–120 (EQEAEEPRKTHSEE) are enriched in basic and acidic residues. A phosphoserine mark is found at Ser-118 and Ser-124. A compositionally biased stretch (basic and acidic residues) spans 240-259 (KAADEKRRSLAKQAREDYKR). Residues Ser-261 and Ser-315 each carry the phosphoserine modification. The 94-residue stretch at 347 to 440 (WFHGILTLKK…LGKELLLYPC (94 aa)) folds into the SH2 domain.

In terms of assembly, interacts with ESR1. In terms of tissue distribution, ubiquitously expressed. Aberrantly expressed in some cancers.

Its subcellular location is the cytoplasm. Inhibits estrogen-induced cell proliferation by competing with PLCG for binding to ESR1, blocking the effect of estrogen on PLCG and repressing estrogen-induced proliferation. May play a role in T-cell development and function. The sequence is that of SH2 domain-containing protein 4A (SH2D4A) from Homo sapiens (Human).